The primary structure comprises 254 residues: Transcription factor CAULIFLOWER (254 aa).

In terms of domain architecture, MADS-box spans 1-61; the sequence is MGRGRVEMKR…GKLFEYSSES (61 aa). Positions 90 to 180 constitute a K-box domain; that stretch reads QTNWSMEYSR…TKQIKERESI (91 aa). Residues 182–191 show a composition bias toward polar residues; that stretch reads RTHQNQSEQQ. A disordered region spans residues 182–205; that stretch reads RTHQNQSEQQNRSHHVAPQPQPQL.

Homodimer capable of binding to CArG-box sequences.

Its subcellular location is the nucleus. Probable transcription factor that promotes early floral meristem identity in synergy with APETALA1, FRUITFULL and LEAFY. Is required subsequently for the transition of an inflorescence meristem into a floral meristem. Seems to be partially redundant to the function of APETALA1. This chain is Transcription factor CAULIFLOWER (CAL), found in Brassica rapa subsp. chinensis (Pak-choi).